We begin with the raw amino-acid sequence, 122 residues long: Basic phospholipase A2 Cdr-13 (122 aa).

Cystine bridges form between C26-C115, C28-C44, C43-C95, C49-C122, C50-C88, C57-C81, and C75-C86. Residues Y27, G29, and G31 each contribute to the Ca(2+) site. H47 is an active-site residue. Residue D48 participates in Ca(2+) binding. The active site involves D89.

The cofactor is Ca(2+). In terms of tissue distribution, expressed by the venom gland.

Its subcellular location is the secreted. It carries out the reaction a 1,2-diacyl-sn-glycero-3-phosphocholine + H2O = a 1-acyl-sn-glycero-3-phosphocholine + a fatty acid + H(+). Functionally, snake venom phospholipase A2 (PLA2) that induces myonecrosis and edema upon subcutaneous injections in mice. In vitro, causes a potent blockade of neuromuscular transmission in young chicken biventer cervicis preparation and produces cytotoxicity in murine C2C12 skeletal muscle myotubes and lack cytolytic activity upon myoblasts in vitro. PLA2 catalyzes the calcium-dependent hydrolysis of the 2-acyl groups in 3-sn-phosphoglycerides. In Crotalus durissus ruruima (South American rattlesnake), this protein is Basic phospholipase A2 Cdr-13.